Here is a 299-residue protein sequence, read N- to C-terminus: MVPTQVTIFSIIMYVLESLVIIVQSCTTVAVLFREWMHFQRLSPVEIILISLGISHFCLQWTSMLYNFGTYSRPVLLFWKVSVVWEFMNVLTFWLTSLLAVLYCVKVSSFSHPVFLWLRLKILKLVLWLLLGALIASCLSIIPSVVKYHIQMELLTLDHLPKNSSLILRLQMFEWYFSNPFKMIGFGVPFLVFLISIILLTVSLVQHWGQMKHYSSSSSSLRAQCTVLKSLATFFIFFTSYFLTIVVSFIGTVFDKKSWFWVCEAVIYGLVCIHFTSLMMSNPTLKKALRLQFWSPESS.

Over methionine 1–glutamine 5 the chain is Extracellular. Residues valine 6–cysteine 26 traverse the membrane as a helical segment. The Cytoplasmic portion of the chain corresponds to threonine 27 to proline 44. A helical transmembrane segment spans residues valine 45 to leucine 65. Topologically, residues tyrosine 66–serine 82 are extracellular. The chain crosses the membrane as a helical span at residues valine 83–tyrosine 103. The Cytoplasmic portion of the chain corresponds to cysteine 104–leucine 125. The helical transmembrane segment at valine 126–valine 146 threads the bilayer. Residues lysine 147–methionine 183 lie on the Extracellular side of the membrane. N-linked (GlcNAc...) asparagine glycosylation is present at asparagine 163. Residues isoleucine 184–leucine 204 traverse the membrane as a helical segment. At valine 205–threonine 233 the chain is on the cytoplasmic side. The chain crosses the membrane as a helical span at residues phenylalanine 234–phenylalanine 254. Residues aspartate 255 to serine 258 lie on the Extracellular side of the membrane. The helical transmembrane segment at tryptophan 259–methionine 279 threads the bilayer. Residues methionine 280–serine 299 are Cytoplasmic-facing.

It belongs to the G-protein coupled receptor T2R family. Interacts with RTP3 and RTP4. As to expression, expressed in subsets of taste receptor cells of the tongue and palate epithelium and exclusively in gustducin-positive cells. Expressed in the antrum and fundus (part of the stomach), duodenum and in gastric endocrine cells.

It localises to the cell membrane. In terms of biological role, gustducin-coupled receptor implicated in the perception of bitter compounds in the oral cavity and the gastrointestinal tract. Signals through PLCB2 and the calcium-regulated cation channel TRPM5. The chain is Taste receptor type 2 member 16 (Tas2r16) from Rattus norvegicus (Rat).